Here is a 360-residue protein sequence, read N- to C-terminus: Peptide chain release factor 1 (360 aa).

Gln237 is subject to N5-methylglutamine.

Belongs to the prokaryotic/mitochondrial release factor family. In terms of processing, methylated by PrmC. Methylation increases the termination efficiency of RF1.

The protein resides in the cytoplasm. Functionally, peptide chain release factor 1 directs the termination of translation in response to the peptide chain termination codons UAG and UAA. This is Peptide chain release factor 1 from Pseudomonas entomophila (strain L48).